Consider the following 79-residue polypeptide: Metallothionein-like protein type 2 (79 aa).

Belongs to the metallothionein superfamily. Type 15 family.

In terms of biological role, metallothioneins have a high content of cysteine residues that bind various heavy metals. The polypeptide is Metallothionein-like protein type 2 (MT1) (Malus domestica (Apple)).